A 378-amino-acid chain; its full sequence is Erythronate-4-phosphate dehydrogenase (378 aa).

Positions 45 and 66 each coordinate substrate. NAD(+) is bound by residues Asp-146 and Thr-175. The active site involves Arg-208. NAD(+) is bound at residue Asp-232. Glu-237 is a catalytic residue. The active-site Proton donor is the His-254. NAD(+) is bound at residue Gly-257. Tyr-258 provides a ligand contact to substrate.

This sequence belongs to the D-isomer specific 2-hydroxyacid dehydrogenase family. PdxB subfamily. Homodimer.

The protein localises to the cytoplasm. The enzyme catalyses 4-phospho-D-erythronate + NAD(+) = (R)-3-hydroxy-2-oxo-4-phosphooxybutanoate + NADH + H(+). Its pathway is cofactor biosynthesis; pyridoxine 5'-phosphate biosynthesis; pyridoxine 5'-phosphate from D-erythrose 4-phosphate: step 2/5. Functionally, catalyzes the oxidation of erythronate-4-phosphate to 3-hydroxy-2-oxo-4-phosphonooxybutanoate. This Escherichia coli O127:H6 (strain E2348/69 / EPEC) protein is Erythronate-4-phosphate dehydrogenase.